A 411-amino-acid polypeptide reads, in one-letter code: Arginine deiminase (411 aa).

The active-site Amidino-cysteine intermediate is the Cys401.

Belongs to the arginine deiminase family.

The protein resides in the cytoplasm. It catalyses the reaction L-arginine + H2O = L-citrulline + NH4(+). Its pathway is amino-acid degradation; L-arginine degradation via ADI pathway; carbamoyl phosphate from L-arginine: step 1/2. The polypeptide is Arginine deiminase (Streptococcus pyogenes serotype M49 (strain NZ131)).